A 352-amino-acid chain; its full sequence is Peptide chain release factor 1 (352 aa).

Position 229 is an N5-methylglutamine (Gln-229).

Belongs to the prokaryotic/mitochondrial release factor family. In terms of processing, methylated by PrmC. Methylation increases the termination efficiency of RF1.

It localises to the cytoplasm. Its function is as follows. Peptide chain release factor 1 directs the termination of translation in response to the peptide chain termination codons UAG and UAA. The chain is Peptide chain release factor 1 from Granulibacter bethesdensis (strain ATCC BAA-1260 / CGDNIH1).